We begin with the raw amino-acid sequence, 222 residues long: Kinetochore protein Spc25 (222 aa).

Residues 51 to 86 (RHQRKVGKLQKVLMERREELDKRVSFIEELDRELEA) are a coiled coil.

The protein belongs to the SPC25 family. In terms of assembly, component of the Ndc80 complex, which is composed of Ndc80, Nuf2 and Spc25.

It localises to the nucleus. The protein localises to the chromosome. Its subcellular location is the centromere. It is found in the kinetochore. Its function is as follows. Acts as a component of the essential kinetochore-associated Ndc80 complex, which is required for chromosome segregation and spindle checkpoint activity during meiosis and mitosis. Required for kinetochore integrity and the organization of stable microtubule binding sites in the outer plate of the kinetochore. Participates in SAC signaling that responds specifically to disruptions in spindle microtubule dynamics. The NDC80 complex synergistically enhances the affinity of the SKA1 complex for microtubules and may allow the NDC80 complex to track depolymerizing microtubules. The sequence is that of Kinetochore protein Spc25 from Drosophila melanogaster (Fruit fly).